A 249-amino-acid chain; its full sequence is Putative SAP domain-containing protein 049L (249 aa).

3 stretches are compositionally biased toward basic and acidic residues: residues 1–12, 22–38, and 95–107; these read MAAPKAEGEDKP, PKPE…KEFC, and KKAE…KLDE. Residues 1–110 form a disordered region; the sequence is MAAPKAEGED…DDKKLDEATG (110 aa). The region spanning 119-153 is the SAP domain; the sequence is LSKLTIQTLKGMCKTRNLKISGNKAALVQRLIEAD.

This is Putative SAP domain-containing protein 049L from Frog virus 3 (isolate Goorha) (FV-3).